The chain runs to 255 residues: Poxin (255 aa).

It belongs to the poxin family. Highly divergent.

It carries out the reaction 2',3'-cGAMP + H2O = Gp(2'-5')Ap(3') + H(+). Nuclease that cleaves 2',3'-cGAMP. In Bombyx mori (Silk moth), this protein is Poxin.